A 146-amino-acid polypeptide reads, in one-letter code: Large ribosomal subunit protein uL15 (146 aa).

Over residues 1-13 (MKLHELHSAEGSR) the composition is skewed to basic and acidic residues. Positions 1–55 (MKLHELHSAEGSRRNRKRVGRGTSSGYGKTSGRGQKGQLARQGGHTRLGFEGGQM) are disordered. The segment covering 23–35 (TSSGYGKTSGRGQ) has biased composition (gly residues).

The protein belongs to the universal ribosomal protein uL15 family. Part of the 50S ribosomal subunit.

Functionally, binds to the 23S rRNA. This chain is Large ribosomal subunit protein uL15, found in Lactobacillus acidophilus (strain ATCC 700396 / NCK56 / N2 / NCFM).